Reading from the N-terminus, the 141-residue chain is Lutropin subunit beta (141 aa).

Residues 1–20 (MERLQGLLLWLLLSPSVVWA) form the signal peptide. 5 cysteine pairs are disulfide-bonded: Cys-29–Cys-77, Cys-43–Cys-92, Cys-54–Cys-108, Cys-58–Cys-110, and Cys-113–Cys-120. Asn-33 carries an N-linked (GlcNAc...) asparagine glycan.

Belongs to the glycoprotein hormones subunit beta family. In terms of assembly, heterodimer of a common alpha chain and a unique beta chain which confers biological specificity to thyrotropin, lutropin, follitropin and gonadotropin.

Its subcellular location is the secreted. Promotes spermatogenesis and ovulation by stimulating the testes and ovaries to synthesize steroids. This chain is Lutropin subunit beta (Lhb), found in Mus musculus (Mouse).